The chain runs to 652 residues: Spermatogenesis-associated protein 13 (652 aa).

A disordered region spans residues 1–24 (MTSASPEDQNAPVGCPKGARRRRP). Ser-78 bears the Phosphoserine mark. The tract at residues 81-108 (IGLDRVGRRRQMRASNVSSDGGTEPSAL) is disordered. Residues 98–150 (SSDGGTEPSALVDDNGSEEDFSYEDLCQASPRYLQPGGEQLAINELISDGNVV) form an ABR (APC-binding region) domain region. Phosphoserine is present on Ser-114. An SH3 domain is found at 147–206 (GNVVCAEALWDHVTMDDQELGFKAGDVIQVLEASNKDWWWGRSEDKEAWFPASFVRLRVN). Positions 209–235 (ELSENSSSTPSEEQDEEASQSRHRHCE) are disordered. Residues 240 to 424 (MRTNVIREIM…KNVACLINER (185 aa)) form the DH domain. The 107-residue stretch at 455-561 (ELIHSGELTK…WLQACADERR (107 aa)) folds into the PH domain. Residues 561 to 652 (RRVQEDKEMG…TFNRLTPFRK (92 aa)) form a C-terminal tail region.

Interacts (via ABR and SH3 domain) with APC. The binding of APC enhances its GEF activity by relieving it from an autoinhibitory conformation, in which the ABR and SH3 domains are associated with the C-terminal tail. Interacts (via C-terminal tail) with PPP1R9B (via C-terminus). Interacts with RAC1. Expressed at high levels in the placenta, spleen and kidney, at moderate levels in lung, small intestine, liver, brain and heart, and at low levels in skeletal muscle. Expression is aberrantly enhanced in most colorectal tumors.

It localises to the cytoplasm. The protein localises to the cell projection. Its subcellular location is the filopodium. It is found in the lamellipodium. The protein resides in the ruffle membrane. It localises to the podosome. With respect to regulation, both the ABR and the SH3 domains contribute to maintaining the protein in an inhibited conformation by associating with the C-terminal tail. Binding of these domains to the C-terminal tail inhibits the activity of the protein by blocking a region that is required for its GEF activity. In terms of biological role, acts as a guanine nucleotide exchange factor (GEF) for RHOA, RAC1 and CDC42 GTPases. Regulates cell migration and adhesion assembly and disassembly through a RAC1, PI3K, RHOA and AKT1-dependent mechanism. Increases both RAC1 and CDC42 activity, but decreases the amount of active RHOA. Required for MMP9 up-regulation via the JNK signaling pathway in colorectal tumor cells. Involved in tumor angiogenesis and may play a role in intestinal adenoma formation and tumor progression. The protein is Spermatogenesis-associated protein 13 of Homo sapiens (Human).